Reading from the N-terminus, the 412-residue chain is Serine hydroxymethyltransferase (412 aa).

(6S)-5,6,7,8-tetrahydrofolate is bound by residues Leu117 and 121–123 (GHL). Position 226 is an N6-(pyridoxal phosphate)lysine (Lys226). 349–351 (SPF) contacts (6S)-5,6,7,8-tetrahydrofolate.

This sequence belongs to the SHMT family. As to quaternary structure, homodimer. Pyridoxal 5'-phosphate is required as a cofactor.

The protein resides in the cytoplasm. The enzyme catalyses (6R)-5,10-methylene-5,6,7,8-tetrahydrofolate + glycine + H2O = (6S)-5,6,7,8-tetrahydrofolate + L-serine. It functions in the pathway one-carbon metabolism; tetrahydrofolate interconversion. The protein operates within amino-acid biosynthesis; glycine biosynthesis; glycine from L-serine: step 1/1. Its function is as follows. Catalyzes the reversible interconversion of serine and glycine with tetrahydrofolate (THF) serving as the one-carbon carrier. This reaction serves as the major source of one-carbon groups required for the biosynthesis of purines, thymidylate, methionine, and other important biomolecules. Also exhibits THF-independent aldolase activity toward beta-hydroxyamino acids, producing glycine and aldehydes, via a retro-aldol mechanism. The chain is Serine hydroxymethyltransferase from Nitratidesulfovibrio vulgaris (strain ATCC 29579 / DSM 644 / CCUG 34227 / NCIMB 8303 / VKM B-1760 / Hildenborough) (Desulfovibrio vulgaris).